Reading from the N-terminus, the 410-residue chain is LL-diaminopimelate aminotransferase (410 aa).

Substrate is bound by residues Tyr-15 and Gly-42. Residues Tyr-72, 108–109 (SK), Tyr-132, Asn-187, Tyr-218, and 246–248 (SFS) contribute to the pyridoxal 5'-phosphate site. 3 residues coordinate substrate: Lys-109, Tyr-132, and Asn-187. An N6-(pyridoxal phosphate)lysine modification is found at Lys-249. The pyridoxal 5'-phosphate site is built by Arg-257 and Asn-292. 2 residues coordinate substrate: Asn-292 and Arg-388.

Belongs to the class-I pyridoxal-phosphate-dependent aminotransferase family. LL-diaminopimelate aminotransferase subfamily. In terms of assembly, homodimer. Pyridoxal 5'-phosphate is required as a cofactor.

It carries out the reaction (2S,6S)-2,6-diaminopimelate + 2-oxoglutarate = (S)-2,3,4,5-tetrahydrodipicolinate + L-glutamate + H2O + H(+). Its pathway is amino-acid biosynthesis; L-lysine biosynthesis via DAP pathway; LL-2,6-diaminopimelate from (S)-tetrahydrodipicolinate (aminotransferase route): step 1/1. Functionally, involved in the synthesis of meso-diaminopimelate (m-DAP or DL-DAP), required for both lysine and peptidoglycan biosynthesis. Catalyzes the direct conversion of tetrahydrodipicolinate to LL-diaminopimelate. This Syntrophotalea carbinolica (strain DSM 2380 / NBRC 103641 / GraBd1) (Pelobacter carbinolicus) protein is LL-diaminopimelate aminotransferase.